Reading from the N-terminus, the 324-residue chain is 2-oxoisovalerate dehydrogenase subunit beta (324 aa).

Thiamine diphosphate-binding positions include E29, 58 to 60 (LSE), Q82, and 86 to 89 (YIFP). Residues 83 to 86 (FADY) and H129 each bind substrate. The Proton acceptor role is filled by H129.

As to quaternary structure, heterotetramer of two alpha and two beta chains. Directly associated with ODBA in the E1 complex. It depends on thiamine diphosphate as a cofactor.

The catalysed reaction is N(6)-[(R)-lipoyl]-L-lysyl-[protein] + 3-methyl-2-oxobutanoate + H(+) = N(6)-[(R)-S(8)-2-methylpropanoyldihydrolipoyl]-L-lysyl-[protein] + CO2. In terms of biological role, the branched-chain alpha-keto dehydrogenase complex catalyzes the overall conversion of alpha-keto acids to acyl-CoA and CO(2). It contains multiple copies of three enzymatic components: branched-chain alpha-keto acid decarboxylase (E1), lipoamide acyltransferase (E2) and lipoamide dehydrogenase (E3). In Thermus thermophilus (strain ATCC BAA-163 / DSM 7039 / HB27), this protein is 2-oxoisovalerate dehydrogenase subunit beta.